The chain runs to 609 residues: Vanadium chloroperoxidase (609 aa).

7 residues coordinate vanadate: K353, R360, S402, G403, H404, R490, and H496. The Proton donor role is filled by H404. The interval K569–P609 is disordered.

This sequence belongs to the vanadium-dependent haloperoxidase family. Homotetramer. It depends on vanadate as a cofactor. The N-terminus is blocked.

The protein resides in the secreted. It carries out the reaction RH + Cl(-) + H2O2 = RCl + 2 H2O.. Catalyzes the oxidation of chloride in the presence of hydrogen peroxide to hypochlorous acid (ClOH), which in turn can react with a nucleophilic acceptor (RH), to form a chlorinated compound. This Curvularia inaequalis (Helminthosporium inaequale) protein is Vanadium chloroperoxidase (CPO).